A 256-amino-acid chain; its full sequence is Trans-aconitate 2-methyltransferase (256 aa).

This sequence belongs to the methyltransferase superfamily. Tam family.

The protein resides in the cytoplasm. The enzyme catalyses trans-aconitate + S-adenosyl-L-methionine = (E)-3-(methoxycarbonyl)pent-2-enedioate + S-adenosyl-L-homocysteine. Its function is as follows. Catalyzes the S-adenosylmethionine monomethyl esterification of trans-aconitate. This Rhizobium leguminosarum bv. trifolii (strain WSM2304) protein is Trans-aconitate 2-methyltransferase.